We begin with the raw amino-acid sequence, 727 residues long: DNA ligase (727 aa).

Residues Asp71 to Asp75, Ser120 to Leu121, and Glu150 contribute to the NAD(+) site. Lys152 serves as the catalytic N6-AMP-lysine intermediate. NAD(+) contacts are provided by Arg173, Glu213, Lys329, and Lys353. The Zn(2+) site is built by Cys447, Cys450, Cys466, and Cys472. Residues Ser636–Pro725 enclose the BRCT domain.

The protein belongs to the NAD-dependent DNA ligase family. LigA subfamily. Mg(2+) serves as cofactor. Requires Mn(2+) as cofactor.

The enzyme catalyses NAD(+) + (deoxyribonucleotide)n-3'-hydroxyl + 5'-phospho-(deoxyribonucleotide)m = (deoxyribonucleotide)n+m + AMP + beta-nicotinamide D-nucleotide.. DNA ligase that catalyzes the formation of phosphodiester linkages between 5'-phosphoryl and 3'-hydroxyl groups in double-stranded DNA using NAD as a coenzyme and as the energy source for the reaction. It is essential for DNA replication and repair of damaged DNA. This Saccharopolyspora erythraea (strain ATCC 11635 / DSM 40517 / JCM 4748 / NBRC 13426 / NCIMB 8594 / NRRL 2338) protein is DNA ligase.